Here is an 80-residue protein sequence, read N- to C-terminus: Putative DNA-directed RNA polymerase subunit omega (80 aa).

Belongs to the RNA polymerase subunit omega family.

It localises to the plastid. It is found in the chloroplast. The catalysed reaction is RNA(n) + a ribonucleoside 5'-triphosphate = RNA(n+1) + diphosphate. May be involved in RNA polymerase activity. The polypeptide is Putative DNA-directed RNA polymerase subunit omega (Gracilaria tenuistipitata var. liui (Red alga)).